The sequence spans 239 residues: mRNA turnover protein 4 homolog (239 aa).

Residues 216–239 (QQMDDDLPESAPESEGESEEEDDS) are disordered. The span at 218-239 (MDDDLPESAPESEGESEEEDDS) shows a compositional bias: acidic residues. Phosphoserine is present on residues serine 225, serine 229, and serine 233.

Belongs to the universal ribosomal protein uL10 family. In terms of assembly, associates with the pre-60S ribosomal particle. Interacts with MINAS-60 (product of an alternative open reading frame of RBM10).

It localises to the nucleus. The protein resides in the nucleolus. Its subcellular location is the cytoplasm. Its function is as follows. Component of the ribosome assembly machinery. Nuclear paralog of the ribosomal protein P0, it binds pre-60S subunits at an early stage of assembly in the nucleolus, and is replaced by P0 in cytoplasmic pre-60S subunits and mature 80S ribosomes. This Mus musculus (Mouse) protein is mRNA turnover protein 4 homolog (Mrto4).